The chain runs to 124 residues: Basic leucine zipper transcriptional factor ATF-like (124 aa).

Over residues methionine 1–glycine 23 the composition is skewed to polar residues. Positions methionine 1–glutamate 60 are disordered. The bZIP domain maps to aspartate 27–histidine 90. Positions arginine 29–lysine 51 are basic motif. The leucine-zipper stretch occupies residues leucine 55–leucine 83.

It belongs to the bZIP family.

It is found in the nucleus. The protein localises to the cytoplasm. AP-1 family transcription factor that controls the differentiation of lineage-specific cells in the immune system: specifically mediates the differentiation of T-helper 17 cells (Th17), follicular T-helper cells (TfH), CD8(+) dendritic cells and class-switch recombination (CSR) in B-cells. The chain is Basic leucine zipper transcriptional factor ATF-like (batf) from Danio rerio (Zebrafish).